The primary structure comprises 307 residues: uncharacterized protein (307 aa).

A helical transmembrane segment spans residues 12 to 34 (LLAFLLALIMIGSVFAYMLSGGS).

The protein localises to the membrane. This is an uncharacterized protein from Archaeoglobus fulgidus (strain ATCC 49558 / DSM 4304 / JCM 9628 / NBRC 100126 / VC-16).